We begin with the raw amino-acid sequence, 482 residues long: Long chain base biosynthesis protein 1c (482 aa).

Residues 33–53 traverse the membrane as a helical segment; sequence FGIHIDGHLVVEGLLIAAILF.

It belongs to the class-II pyridoxal-phosphate-dependent aminotransferase family. In terms of assembly, heterodimer with LCB2. Component of the serine palmitoyltransferase (SPT) complex, composed of LCB1 and LCB2. It depends on pyridoxal 5'-phosphate as a cofactor.

It localises to the endoplasmic reticulum membrane. It carries out the reaction L-serine + hexadecanoyl-CoA + H(+) = 3-oxosphinganine + CO2 + CoA. It participates in lipid metabolism; sphingolipid metabolism. Serine palmitoyltransferase (SPT). The heterodimer formed with LCB2 constitutes the catalytic core. The polypeptide is Long chain base biosynthesis protein 1c (Oryza sativa subsp. japonica (Rice)).